Here is a 127-residue protein sequence, read N- to C-terminus: Large ribosomal subunit protein bL20c (127 aa).

It belongs to the bacterial ribosomal protein bL20 family.

It localises to the plastid. The protein localises to the chloroplast. Its function is as follows. Binds directly to 23S ribosomal RNA and is necessary for the in vitro assembly process of the 50S ribosomal subunit. It is not involved in the protein synthesizing functions of that subunit. The polypeptide is Large ribosomal subunit protein bL20c (Jasminum nudiflorum (Winter jasmine)).